A 1154-amino-acid chain; its full sequence is MAVPARTCGASWPGPVRTARPWPGRGPRPCPDPRGPASGPARPLLLLLPPLLLLPLLTAPGASAYSFPQQHTMQHWARRLEQEIDGVMRIFGGVQQLREIYKDNRNLFEVQENEPQKLVEKVAGDIESLLDRKVQALKRLADAAENFQKAHRWQDNIKEEDIMYYDAKADAELDDPESEDMERGSKTSALRLDFIEDPNFKNKVNYSYTAVQIPTDIYKGSTVILNELNWTEALENVFIENRRQDPTLLWQVFGSATGVTRYYPATPWRAPKKIDLYDVRRRPWYIQGASSPKDMVIIVDVSGSVSGLTLKLMKTSVCEMLDTLSDDDYVNVASFNEKAQPVSCFTHLVQANVRNKKVFKEAVQGMVAKGTTGYKAGFEYAFDQLQNSNITRANCNKMIMMFTDGGEDRVQDVFEKYNWPNRTVRVFTFSVGQHNYDVTPLQWMACTNKGYYFEIPSIGAIRINTQEYLDVLGRPMVLAGKDAKQVQWTNVYEDALGLGLVVTGTLPVFNLTQDGPGEKKNQLILGVMGIDVALNDIKRLTPNYTLGANGYVFAIDLNGYVLLHPNLKPQTTNFREPVTLDFLDAELEDENKEEIRRSMIDGDKGHKQIRTLVKSLDERYIDEVIRNYTWVPIRSTNYSLGLVLPPYSTYYLQANLSDQILQVKLPISKLKDFEFLLPSSFESEGHVFIAPREYCKDLNASDNNTEFLKNFIELMEKVTPDSKQCNNFLLHNLILDTGITQQLVERVWRDQDLNTYSLLAVFAATDGGITRVFPNKAAEDWTENPEPFNASFYRRSLDNHGYIFKPPHQDSLLRPLELENDTVGVLVSTAVELSLGRRTLRPAVVGVKLDLEAWAEKFKVLASNRTHQDQPQKCGPSSHCEMDCEVNNEDLLCVLIDDGGFLVLSNQNHQWDQVGRFFSEVDANLMLALYNNSFYTRKESYDYQAACAPQPPGNLGAAPRGVFVPTIADFLNLAWWTSAAAWSLFQQLLYGLIYHSWFQADPAEAEGSPETRESSCVMKQTQYYFGSVNASYNAIIDCGNCSRLFHAQRLTNTNLLFVVAEKPLCSQCEAGRLLQKETHSDGPEQCELVQRPRYRRGPHICFDYNATEDTSDCGRGASFPPSLGVLVSLQLLLLLGLPPRPQPQVHSFAASRHL.

A signal peptide spans 1–18 (MAVPARTCGASWPGPVRT). Positions 1–37 (MAVPARTCGASWPGPVRTARPWPGRGPRPCPDPRGPA) are disordered. At 19–1116 (ARPWPGRGPR…TEDTSDCGRG (1098 aa)) the chain is on the extracellular side. Residues 24-34 (GRGPRPCPDPR) show a composition bias toward pro residues. N-linked (GlcNAc...) asparagine glycosylation is present at Asn205. In terms of domain architecture, VWFA spans 294–472 (DMVIIVDVSG…INTQEYLDVL (179 aa)). Residues Asp300, Ser302, and Ser304 each contribute to the a divalent metal cation site. The MIDAS-like motif signature appears at 300-304 (DVSGS). N-linked (GlcNAc...) asparagine glycosylation is found at Asn389, Asn421, Asn510, Asn543, Asn627, and Asn864. A disulfide bridge connects residues Cys446 and Cys1101. The Cache domain maps to 488-577 (WTNVYEDALG…KPQTTNFREP (90 aa)). Residues 1117–1137 (ASFPPSLGVLVSLQLLLLLGL) form a helical membrane-spanning segment. Residues 1138–1154 (PPRPQPQVHSFAASRHL) are Cytoplasmic-facing.

Belongs to the calcium channel subunit alpha-2/delta family. In terms of assembly, dimer formed of alpha-2-2 and delta-2 chains; disulfide-linked. Voltage-dependent calcium channels are multisubunit complexes, consisting of alpha-1 (CACNA1), alpha-2 (CACNA2D), beta (CACNB) and delta (CACNA2D) subunits in a 1:1:1:1 ratio. In terms of processing, N-glycosylated. Post-translationally, may be proteolytically processed into subunits alpha-2-2 and delta-2 that are disulfide-linked. It is however unclear whether such cleavage really takes place in vivo and has a functional role. According to PubMed:11306709, it is processed, at least in vitro, while according to PubMed:17052222, it is only poorly processed in vivo. As to expression, predominantly expressed in brain in a restricted pattern. Also expressed at lower level in kidney and testis Not expressed in lung at any moment of development. In brain, it localizes to sections of P21 brain. Expressed at high level in the cerebellum, with moderate levels in medulla, pons, and striatum. Also expressed in cortex, hippocampus, habenula and nucleus reticularis thalami (nRT). Strongly expressed in cerebellar Purkinje cells.

The protein resides in the membrane. In terms of biological role, the alpha-2/delta subunit of voltage-dependent calcium channels regulates calcium current density and activation/inactivation kinetics of the calcium channel. Acts as a regulatory subunit for P/Q-type calcium channel (CACNA1A), N-type (CACNA1B), L-type (CACNA1C OR CACNA1D) and possibly T-type (CACNA1G). The chain is Voltage-dependent calcium channel subunit alpha-2/delta-2 (Cacna2d2) from Mus musculus (Mouse).